Here is a 202-residue protein sequence, read N- to C-terminus: MNKLFLILLLIFSHEVFSQTSAEVLQSKLNAIQTMTANFSQIVKAKNREVSRSSGSMALQRPGRFRWQTKDPLEQLIVADGQKMWIYDVDLEQVTVKNQEKGLGGTAALFLSGYDETLTHDFDVSEKQKGKLTVFDLKSKSAKENFQRIKLIFSQSTLIGLELYDQLGQITDVKLVQIKSNPKLPAKLFQFKPPKGVDVVKQ.

The N-terminal stretch at 1–18 (MNKLFLILLLIFSHEVFS) is a signal peptide.

The protein belongs to the LolA family. Monomer.

It localises to the periplasm. Its function is as follows. Participates in the translocation of lipoproteins from the inner membrane to the outer membrane. Only forms a complex with a lipoprotein if the residue after the N-terminal Cys is not an aspartate (The Asp acts as a targeting signal to indicate that the lipoprotein should stay in the inner membrane). This is Outer-membrane lipoprotein carrier protein from Legionella pneumophila (strain Corby).